We begin with the raw amino-acid sequence, 92 residues long: uncharacterized protein (92 aa).

The HMA domain maps to 24–89; sequence KQIVLKVKEM…AIHKLKYTAE (66 aa). A metal cation-binding residues include Cys-35 and Cys-38.

This is an uncharacterized protein from Haemophilus influenzae (strain ATCC 51907 / DSM 11121 / KW20 / Rd).